The primary structure comprises 153 residues: Putative tRNA (cytidine(34)-2'-O)-methyltransferase (153 aa).

Positions 102, 122, and 131 each coordinate S-adenosyl-L-methionine.

It belongs to the class IV-like SAM-binding methyltransferase superfamily. RNA methyltransferase TrmH family. TrmL subfamily.

Its subcellular location is the cytoplasm. The enzyme catalyses cytidine(34) in tRNA + S-adenosyl-L-methionine = 2'-O-methylcytidine(34) in tRNA + S-adenosyl-L-homocysteine + H(+). It carries out the reaction 5-carboxymethylaminomethyluridine(34) in tRNA(Leu) + S-adenosyl-L-methionine = 5-carboxymethylaminomethyl-2'-O-methyluridine(34) in tRNA(Leu) + S-adenosyl-L-homocysteine + H(+). Functionally, could methylate the ribose at the nucleotide 34 wobble position in tRNA. The chain is Putative tRNA (cytidine(34)-2'-O)-methyltransferase from Synechocystis sp. (strain ATCC 27184 / PCC 6803 / Kazusa).